The primary structure comprises 248 residues: Probable transcriptional regulatory protein Fphi_1565 (248 aa).

This sequence belongs to the TACO1 family.

It is found in the cytoplasm. The sequence is that of Probable transcriptional regulatory protein Fphi_1565 from Francisella philomiragia subsp. philomiragia (strain ATCC 25017 / CCUG 19701 / FSC 153 / O#319-036).